The primary structure comprises 297 residues: Ribosomal RNA small subunit methyltransferase H (297 aa).

Residues G37–H39, D56, F87, D102, and H109 each bind S-adenosyl-L-methionine.

Belongs to the methyltransferase superfamily. RsmH family.

It is found in the cytoplasm. It carries out the reaction cytidine(1402) in 16S rRNA + S-adenosyl-L-methionine = N(4)-methylcytidine(1402) in 16S rRNA + S-adenosyl-L-homocysteine + H(+). Functionally, specifically methylates the N4 position of cytidine in position 1402 (C1402) of 16S rRNA. The protein is Ribosomal RNA small subunit methyltransferase H of Borrelia turicatae (strain 91E135).